The following is a 93-amino-acid chain: uncharacterized protein (93 aa).

Residues 41-62 (RSANRIPTTSSTSTSGTIPTTT) form a disordered region. Residues 46-62 (IPTTSSTSTSGTIPTTT) are compositionally biased toward low complexity.

This is an uncharacterized protein from Dictyostelium discoideum (Social amoeba).